Here is a 278-residue protein sequence, read N- to C-terminus: Elongation factor Ts (278 aa).

The involved in Mg(2+) ion dislocation from EF-Tu stretch occupies residues 81–84 (TDFV).

The protein belongs to the EF-Ts family.

It localises to the cytoplasm. In terms of biological role, associates with the EF-Tu.GDP complex and induces the exchange of GDP to GTP. It remains bound to the aminoacyl-tRNA.EF-Tu.GTP complex up to the GTP hydrolysis stage on the ribosome. In Thermobifida fusca (strain YX), this protein is Elongation factor Ts.